We begin with the raw amino-acid sequence, 377 residues long: EPS I polysaccharide export outer membrane protein EpsA (377 aa).

Residues 1–23 (MFVSIPSIRKTVMSLCAVPLMAA) form the signal peptide. Residue Cys-24 is the site of N-palmitoyl cysteine attachment. Cys-24 is lipidated: S-diacylglycerol cysteine.

The protein belongs to the BexD/CtrA/VexA family.

It is found in the cell outer membrane. Probably involved in polymerization and/or export of exopolysaccharide EPS I which functions as a virulence factor. This chain is EPS I polysaccharide export outer membrane protein EpsA (epsA), found in Ralstonia solanacearum (Pseudomonas solanacearum).